Here is a 294-residue protein sequence, read N- to C-terminus: Glycine--tRNA ligase alpha subunit (294 aa).

This sequence belongs to the class-II aminoacyl-tRNA synthetase family. In terms of assembly, tetramer of two alpha and two beta subunits.

It localises to the cytoplasm. The enzyme catalyses tRNA(Gly) + glycine + ATP = glycyl-tRNA(Gly) + AMP + diphosphate. In Natranaerobius thermophilus (strain ATCC BAA-1301 / DSM 18059 / JW/NM-WN-LF), this protein is Glycine--tRNA ligase alpha subunit.